The following is a 339-amino-acid chain: Phosphoribosylformylglycinamidine cyclo-ligase (339 aa).

This sequence belongs to the AIR synthase family.

The protein localises to the cytoplasm. The catalysed reaction is 2-formamido-N(1)-(5-O-phospho-beta-D-ribosyl)acetamidine + ATP = 5-amino-1-(5-phospho-beta-D-ribosyl)imidazole + ADP + phosphate + H(+). Its pathway is purine metabolism; IMP biosynthesis via de novo pathway; 5-amino-1-(5-phospho-D-ribosyl)imidazole from N(2)-formyl-N(1)-(5-phospho-D-ribosyl)glycinamide: step 2/2. The chain is Phosphoribosylformylglycinamidine cyclo-ligase from Desulfitobacterium hafniense (strain DSM 10664 / DCB-2).